The primary structure comprises 215 residues: uncharacterized protein (215 aa).

A disordered region spans residues 25–48; that stretch reads LKSASPGPAPASQQASSFGSAPAQ. Residues 27–47 are compositionally biased toward low complexity; it reads SASPGPAPASQQASSFGSAPA.

This is an uncharacterized protein from Homo sapiens (Human).